The following is a 181-amino-acid chain: ATP-dependent protease subunit HslV (181 aa).

Residue Thr-7 is part of the active site. Gly-166, Cys-169, and Thr-172 together coordinate Na(+).

The protein belongs to the peptidase T1B family. HslV subfamily. As to quaternary structure, a double ring-shaped homohexamer of HslV is capped on each side by a ring-shaped HslU homohexamer. The assembly of the HslU/HslV complex is dependent on binding of ATP.

The protein localises to the cytoplasm. It catalyses the reaction ATP-dependent cleavage of peptide bonds with broad specificity.. Allosterically activated by HslU binding. Its function is as follows. Protease subunit of a proteasome-like degradation complex believed to be a general protein degrading machinery. The sequence is that of ATP-dependent protease subunit HslV from Acidovorax ebreus (strain TPSY) (Diaphorobacter sp. (strain TPSY)).